The primary structure comprises 320 residues: tRNA dimethylallyltransferase (320 aa).

17–24 (GPTAVGKT) contacts ATP. 19 to 24 (TAVGKT) is a binding site for substrate. Residues 42-45 (DSMQ) are interaction with substrate tRNA.

The protein belongs to the IPP transferase family. Monomer. It depends on Mg(2+) as a cofactor.

It catalyses the reaction adenosine(37) in tRNA + dimethylallyl diphosphate = N(6)-dimethylallyladenosine(37) in tRNA + diphosphate. Catalyzes the transfer of a dimethylallyl group onto the adenine at position 37 in tRNAs that read codons beginning with uridine, leading to the formation of N6-(dimethylallyl)adenosine (i(6)A). The sequence is that of tRNA dimethylallyltransferase from Bacillus thuringiensis (strain Al Hakam).